The primary structure comprises 260 residues: Membrane protein insertase YidC 1 (260 aa).

The N-terminal stretch at 1-22 (MLKSYRAVLVSLSLLFVFVLSG) is a signal peptide. Cys-23 is lipidated: N-palmitoyl cysteine. Residue Cys-23 is the site of S-diacylglycerol cysteine attachment. The next 5 helical transmembrane spans lie at 29–49 (IDAH…SFMI), 52–72 (VAHH…TLVI), 133–153 (LAGC…YYAI), 164–184 (FLWV…IAAL), and 213–233 (MPAM…LYWI).

This sequence belongs to the OXA1/ALB3/YidC family. Type 2 subfamily.

It is found in the cell membrane. In terms of biological role, required for the insertion and/or proper folding and/or complex formation of integral membrane proteins into the membrane. Involved in integration of membrane proteins that insert both dependently and independently of the Sec translocase complex, as well as at least some lipoproteins. The sequence is that of Membrane protein insertase YidC 1 from Bacillus cereus (strain ATCC 14579 / DSM 31 / CCUG 7414 / JCM 2152 / NBRC 15305 / NCIMB 9373 / NCTC 2599 / NRRL B-3711).